A 122-amino-acid polypeptide reads, in one-letter code: Small ribosomal subunit protein uS13 (122 aa).

The segment at 99-122 (RGQRTHTNARTRKGPAKAIAGKKK) is disordered.

It belongs to the universal ribosomal protein uS13 family. In terms of assembly, part of the 30S ribosomal subunit. Forms a loose heterodimer with protein S19. Forms two bridges to the 50S subunit in the 70S ribosome.

Its function is as follows. Located at the top of the head of the 30S subunit, it contacts several helices of the 16S rRNA. In the 70S ribosome it contacts the 23S rRNA (bridge B1a) and protein L5 of the 50S subunit (bridge B1b), connecting the 2 subunits; these bridges are implicated in subunit movement. Contacts the tRNAs in the A and P-sites. This chain is Small ribosomal subunit protein uS13, found in Bradyrhizobium sp. (strain ORS 278).